Consider the following 352-residue polypeptide: NADH-ubiquinone oxidoreductase chain 2 (352 aa).

The next 11 membrane-spanning stretches (helical) occupy residues 4 to 24 (MISIFLFLTVVSGTIIVVSAE), 26 to 46 (WFVIWLGLELSTLALIPILWF), 60 to 80 (FLVQAFSAALLLNSALIQAWF), 96 to 116 (LCLSVALAFNLGLAACHFWLP), 124 to 144 (FIQGLIIATWQKIAPLFLLFY), 150 to 170 (FSYFIILAALISILVGGWGGL), 178 to 198 (ILAFSSIGNMGWIVVTSAFSL), 205 to 225 (LFIYLVINTSIFLILDFLSIF), 241 to 261 (ITLVILTILSLGGLPPLTGFI), 274 to 294 (GFIFFSSVMIIGSLLSLFFYL), and 330 to 350 (LVSSFSVLSILAIPLTIPLYI).

The protein belongs to the complex I subunit 2 family.

It localises to the mitochondrion inner membrane. It carries out the reaction a ubiquinone + NADH + 5 H(+)(in) = a ubiquinol + NAD(+) + 4 H(+)(out). Functionally, core subunit of the mitochondrial membrane respiratory chain NADH dehydrogenase (Complex I) that is believed to belong to the minimal assembly required for catalysis. Complex I functions in the transfer of electrons from NADH to the respiratory chain. The immediate electron acceptor for the enzyme is believed to be ubiquinone. This is NADH-ubiquinone oxidoreductase chain 2 (ND2) from Paracentrotus lividus (Common sea urchin).